Reading from the N-terminus, the 255-residue chain is Putative Myb family transcription factor At1g14600 (255 aa).

In terms of domain architecture, HTH myb-type spans 20-80 (RSPVPRLRWT…HLQMYRGSRI (61 aa)). Positions 51–76 (PKLVLKIMDVKGLTISHVKSHLQMYR) form a DNA-binding region, H-T-H motif. Residues 80–110 (ITLLGKPEESSSPSSRRRRRQDNEEDHLHDN) form a disordered region.

Its subcellular location is the nucleus. In terms of biological role, putative transcription factor. This is Putative Myb family transcription factor At1g14600 from Arabidopsis thaliana (Mouse-ear cress).